The chain runs to 48 residues: Large ribosomal subunit protein bL32 (48 aa).

The disordered stretch occupies residues 1 to 20 (MAVPDRRVSKTRAAKRRTHY). Residues 9 to 20 (SKTRAAKRRTHY) are compositionally biased toward basic residues.

This sequence belongs to the bacterial ribosomal protein bL32 family.

The chain is Large ribosomal subunit protein bL32 from Helicobacter acinonychis (strain Sheeba).